The primary structure comprises 252 residues: Thiazole synthase (252 aa).

The active-site Schiff-base intermediate with DXP is lysine 91. Residues glycine 152, 179–180, and 201–202 contribute to the 1-deoxy-D-xylulose 5-phosphate site; these read AG and NT.

This sequence belongs to the ThiG family. Homotetramer. Forms heterodimers with either ThiH or ThiS.

The protein resides in the cytoplasm. It carries out the reaction [ThiS sulfur-carrier protein]-C-terminal-Gly-aminoethanethioate + 2-iminoacetate + 1-deoxy-D-xylulose 5-phosphate = [ThiS sulfur-carrier protein]-C-terminal Gly-Gly + 2-[(2R,5Z)-2-carboxy-4-methylthiazol-5(2H)-ylidene]ethyl phosphate + 2 H2O + H(+). It functions in the pathway cofactor biosynthesis; thiamine diphosphate biosynthesis. Functionally, catalyzes the rearrangement of 1-deoxy-D-xylulose 5-phosphate (DXP) to produce the thiazole phosphate moiety of thiamine. Sulfur is provided by the thiocarboxylate moiety of the carrier protein ThiS. In vitro, sulfur can be provided by H(2)S. This is Thiazole synthase from Erwinia pyrifoliae (strain DSM 12162 / Ep1/96).